Reading from the N-terminus, the 201-residue chain is Recombination protein RecR (201 aa).

The C4-type zinc-finger motif lies at 60 to 75 (CATCGNFDTVQPCAVC). In terms of domain architecture, Toprim spans 83–178 (GIICVVEDVP…DVTRLAHGVP (96 aa)).

It belongs to the RecR family.

Functionally, may play a role in DNA repair. It seems to be involved in an RecBC-independent recombinational process of DNA repair. It may act with RecF and RecO. The polypeptide is Recombination protein RecR (Hyphomonas neptunium (strain ATCC 15444)).